The sequence spans 414 residues: 3-oxo-tetronate kinase (414 aa).

ATP-binding positions include Ser-255, 355-358 (GGET), and Gly-398.

Belongs to the four-carbon acid sugar kinase family.

It carries out the reaction 3-dehydro-L-erythronate + ATP = 3-dehydro-4-O-phospho-L-erythronate + ADP + H(+). The catalysed reaction is 3-dehydro-D-erythronate + ATP = 3-dehydro-4-O-phospho-D-erythronate + ADP + H(+). In terms of biological role, catalyzes the ATP-dependent phosphorylation of 3-oxo-tetronate to 3-oxo-tetronate 4-phosphate. The protein is 3-oxo-tetronate kinase of Actinobacillus succinogenes (strain ATCC 55618 / DSM 22257 / CCUG 43843 / 130Z).